We begin with the raw amino-acid sequence, 408 residues long: Serine/threonine transporter SstT (408 aa).

9 consecutive transmembrane segments (helical) span residues 11-31 (LANGSLVLQILVGIIAGVALA), 43-63 (FLGSLFVGALKAIAPILVFIL), 82-102 (IVVLYLLGTFAAALTAVILSM), 141-161 (ALMTGNYIGILAWGVGLGLAL), 192-212 (IGIFGLVAATFAETGFAAIAG), 216-236 (LLAVLLGAMAFIALIINPLIV), 290-310 (IPLGATINMGGAAITITVLTL), 316-336 (LGIQVDLLTALLLSVVAAISA), and 363-383 (VAMQVVAVGFIIGVIQDAAET).

It belongs to the dicarboxylate/amino acid:cation symporter (DAACS) (TC 2.A.23) family.

It is found in the cell inner membrane. It carries out the reaction L-serine(in) + Na(+)(in) = L-serine(out) + Na(+)(out). The enzyme catalyses L-threonine(in) + Na(+)(in) = L-threonine(out) + Na(+)(out). Its function is as follows. Involved in the import of serine and threonine into the cell, with the concomitant import of sodium (symport system). The protein is Serine/threonine transporter SstT of Shewanella oneidensis (strain ATCC 700550 / JCM 31522 / CIP 106686 / LMG 19005 / NCIMB 14063 / MR-1).